The primary structure comprises 491 residues: Probable glycine dehydrogenase (decarboxylating) subunit 2 (491 aa).

Lysine 273 carries the post-translational modification N6-(pyridoxal phosphate)lysine.

Belongs to the GcvP family. C-terminal subunit subfamily. As to quaternary structure, the glycine cleavage system is composed of four proteins: P, T, L and H. In this organism, the P 'protein' is a heterodimer of two subunits. Requires pyridoxal 5'-phosphate as cofactor.

The catalysed reaction is N(6)-[(R)-lipoyl]-L-lysyl-[glycine-cleavage complex H protein] + glycine + H(+) = N(6)-[(R)-S(8)-aminomethyldihydrolipoyl]-L-lysyl-[glycine-cleavage complex H protein] + CO2. Functionally, the glycine cleavage system catalyzes the degradation of glycine. The P protein binds the alpha-amino group of glycine through its pyridoxal phosphate cofactor; CO(2) is released and the remaining methylamine moiety is then transferred to the lipoamide cofactor of the H protein. The chain is Probable glycine dehydrogenase (decarboxylating) subunit 2 from Bacillus velezensis (strain DSM 23117 / BGSC 10A6 / LMG 26770 / FZB42) (Bacillus amyloliquefaciens subsp. plantarum).